We begin with the raw amino-acid sequence, 119 residues long: Beta-2-microglobulin (119 aa).

The first 20 residues, 1 to 20, serve as a signal peptide directing secretion; that stretch reads MARSVVVALLVLLSLSGLEA. One can recognise an Ig-like C1-type domain in the interval 25 to 114; sequence PKIQVYSRHP…VTFPTPKTVK (90 aa). Cys-45 and Cys-100 form a disulfide bridge.

The protein belongs to the beta-2-microglobulin family. Heterodimer of an alpha chain and a beta chain. Beta-2-microglobulin is the beta-chain of major histocompatibility complex class I molecules.

It is found in the secreted. Its function is as follows. Component of the class I major histocompatibility complex (MHC). Involved in the presentation of peptide antigens to the immune system. The protein is Beta-2-microglobulin (B2M) of Lagothrix lagotricha (Brown woolly monkey).